The primary structure comprises 75 residues: Defensin-like protein (75 aa).

Positions 1 to 24 (MEKKSIAGLCFLFLVLFVAQEVVV) are cleaved as a signal peptide. Intrachain disulfides connect C31-C75, C42-C63, C48-C69, and C52-C71.

Belongs to the DEFL family.

Its subcellular location is the secreted. Functionally, this protein is required for germination. The chain is Defensin-like protein from Vigna unguiculata (Cowpea).